A 721-amino-acid chain; its full sequence is Tripartite terminase subunit 1 (721 aa).

A C3H1-type zinc finger spans residues 189–217 (CLKCYEELSLVPNQGKSIRKRLAGKFCNH). 625–632 (YNDVFGKQ) contributes to the ATP binding site.

This sequence belongs to the herpesviridae TRM1 protein family. In terms of assembly, associates with TRM2 and TRM3 to form the tripartite terminase complex. Interacts with portal protein.

Its subcellular location is the host nucleus. Functionally, component of the molecular motor that translocates viral genomic DNA in empty capsid during DNA packaging. Forms a tripartite terminase complex together with TRM2 and TRM3 in the host cytoplasm. Once the complex reaches the host nucleus, it interacts with the capsid portal vertex. This portal forms a ring in which genomic DNA is translocated into the capsid. TRM1 carries an endonuclease activity that plays an important role for the cleavage of concatemeric viral DNA into unit length genomes. This chain is Tripartite terminase subunit 1, found in Homo sapiens (Human).